The primary structure comprises 638 residues: Eukaryotic translation initiation factor 2A (638 aa).

WD repeat units follow at residues 287 to 329 (SKEG…FDFG) and 331 to 370 (GPRN…KLAN). Basic and acidic residues predominate over residues 441–450 (KITKAKHEGI). The interval 441-593 (KITKAKHEGI…SDKERKIRSV (153 aa)) is disordered. The residue at position 463 (T463) is a Phosphothreonine. Residues 492–501 (AAAGGVNGNK) are compositionally biased toward low complexity. Over residues 583–593 (ISDKERKIRSV) the composition is skewed to basic and acidic residues.

The protein belongs to the WD repeat EIF2A family.

Functionally, functions in the early steps of protein synthesis of a small number of specific mRNAs. Acts by directing the binding of methionyl-tRNAi to 40S ribosomal subunits. In contrast to the eIF-2 complex, it binds methionyl-tRNAi to 40S subunits in a codon-dependent manner, whereas the eIF-2 complex binds methionyl-tRNAi to 40S subunits in a GTP-dependent manner. The chain is Eukaryotic translation initiation factor 2A from Drosophila melanogaster (Fruit fly).